Here is a 439-residue protein sequence, read N- to C-terminus: Mitochondrial distribution and morphology protein 12 (439 aa).

The SMP-LTD domain occupies 1–439 (MSIDVNWRSA…VYPSFWTFLI (439 aa)). The span at 70 to 85 (YEEDDDDHTSDASEEL) shows a compositional bias: acidic residues. Disordered regions lie at residues 70 to 102 (YEED…ELNE), 184 to 274 (SGWS…PPRM), and 353 to 386 (GSEQ…RHGG). A compositionally biased stretch (basic and acidic residues) spans 197–212 (GRSERHAGMKHQRAEP). A compositionally biased stretch (polar residues) spans 215-230 (DTSNSTSRPSTANTLP). Over residues 231–240 (SHPSSSSKNS) the composition is skewed to low complexity. Residues 247 to 261 (RNDHPSLHAGEHIED) show a composition bias toward basic and acidic residues.

The protein belongs to the MDM12 family. As to quaternary structure, component of the ER-mitochondria encounter structure (ERMES) or MDM complex, composed of mmm1, mdm10, mdm12 and mdm34. A mmm1 homodimer associates with one molecule of mdm12 on each side in a pairwise head-to-tail manner, and the SMP-LTD domains of mmm1 and mdm12 generate a continuous hydrophobic tunnel for phospholipid trafficking.

It is found in the mitochondrion outer membrane. Its subcellular location is the endoplasmic reticulum membrane. Its function is as follows. Component of the ERMES/MDM complex, which serves as a molecular tether to connect the endoplasmic reticulum (ER) and mitochondria. Components of this complex are involved in the control of mitochondrial shape and protein biogenesis, and function in nonvesicular lipid trafficking between the ER and mitochondria. Mdm12 is required for the interaction of the ER-resident membrane protein mmm1 and the outer mitochondrial membrane-resident beta-barrel protein mdm10. The mdm12-mmm1 subcomplex functions in the major beta-barrel assembly pathway that is responsible for biogenesis of all mitochondrial outer membrane beta-barrel proteins, and acts in a late step after the SAM complex. The mdm10-mdm12-mmm1 subcomplex further acts in the TOM40-specific pathway after the action of the mdm12-mmm1 complex. Essential for establishing and maintaining the structure of mitochondria and maintenance of mtDNA nucleoids. The protein is Mitochondrial distribution and morphology protein 12 of Neosartorya fischeri (strain ATCC 1020 / DSM 3700 / CBS 544.65 / FGSC A1164 / JCM 1740 / NRRL 181 / WB 181) (Aspergillus fischerianus).